The primary structure comprises 227 residues: Urease accessory protein UreE (227 aa).

The segment at 192–227 (PHGSGLHVHAIHSHGHSHSHDHDHDHNHDHDHKHKQ) is disordered. Over residues 209–221 (HSHDHDHDHNHDH) the composition is skewed to basic and acidic residues.

Belongs to the UreE family.

It localises to the cytoplasm. In terms of biological role, involved in urease metallocenter assembly. Binds nickel. Probably functions as a nickel donor during metallocenter assembly. This is Urease accessory protein UreE from Yersinia bercovieri.